The following is a 473-amino-acid chain: Inactive pancreatic lipase-related protein 1 (473 aa).

An N-terminal signal peptide occupies residues 1–17 (MLILWTIPLFLLGAAQG). 2 disulfides stabilise this stretch: Cys-21–Cys-27 and Cys-109–Cys-120. Residue Ser-171 is the Nucleophile of the active site. Asp-194 functions as the Charge relay system in the catalytic mechanism. The Ca(2+) site is built by Glu-205, Arg-208, Asp-210, and Asp-213. The cysteines at positions 255 and 279 are disulfide-linked. His-281 functions as the Charge relay system in the catalytic mechanism. Cystine bridges form between Cys-303-Cys-314, Cys-317-Cys-322, and Cys-451-Cys-467. The region spanning 356–467 (WRYRVSLTFS…EDILLTLLPC (112 aa)) is the PLAT domain.

The protein belongs to the AB hydrolase superfamily. Lipase family. Expressed in female, but not in male, lacrimal gland. Expressed in male and female sublingual gland and pancreas.

The protein localises to the secreted. In terms of biological role, may function as inhibitor of dietary triglyceride digestion. Lacks detectable lipase activity (in vitro). The chain is Inactive pancreatic lipase-related protein 1 (Pnliprp1) from Mus musculus (Mouse).